The chain runs to 278 residues: E3 ubiquitin-protein ligase MARCHF5 (278 aa).

An RING-CH-type zinc finger spans residues 6 to 75 (LQQMLDRSCW…PQCNAEYLIV (70 aa)). 8 residues coordinate Zn(2+): cysteine 14, cysteine 17, cysteine 33, cysteine 35, histidine 43, cysteine 46, cysteine 65, and cysteine 68. 4 helical membrane-spanning segments follow: residues 99–119 (FAAA…YGAV), 139–159 (PLFL…GKMI), 209–229 (ILCG…LMFS), and 238–258 (TILG…YFKQ).

In terms of assembly, monomer and homodimer. Interacts with MFN1, MFN2, DNM1L and FIS1. Post-translationally, autoubiquitinated leading to degradation (short half-life).

The protein resides in the mitochondrion outer membrane. The enzyme catalyses S-ubiquitinyl-[E2 ubiquitin-conjugating enzyme]-L-cysteine + [acceptor protein]-L-lysine = [E2 ubiquitin-conjugating enzyme]-L-cysteine + N(6)-ubiquitinyl-[acceptor protein]-L-lysine.. The protein operates within protein modification; protein ubiquitination. Mitochondrial E3 ubiquitin-protein ligase that plays a crucial role in the control of mitochondrial morphology by acting as a positive regulator of mitochondrial fission and as an important regulator of immune response. Plays a crucial role in maintaining mitochondrial homeostasis by regulating the dynamics of mitochondria through the ubiquitination of key proteins involved in fission and fusion such as FIS1, DNM1L and MFN1. Acts as a critical determinant of mitotic apoptosis through both MCL1-dependent and -independent pathways. Turns off persistent immune signaling by degrading oligomeric complexes of retinoic acid-inducible gene I/DDX58 and mitochondrial antiviral-signaling protein/MAVS formed upon RNA virus infection. Promotes STING-mediated type-I interferon production via 'Lys-63'-linked ubiquitination of STING1 thereby preserving its activity and preventing the formation of inactive STING1 polymers. Plays also an essential role in the formation of PEX3-containing vesicles in the de novo biogenesis of peroxisomes from mitochondria. Acts as a regulator of NLRP3 inflammasome activation on the mitochondria by mediating the 'Lys-27'-linked polyubiquitination of NLRP3, positively regulating the NLRP3-NEK7 complex formation and NLRP3 oligomerization. The sequence is that of E3 ubiquitin-protein ligase MARCHF5 (MARCHF5) from Bos taurus (Bovine).